A 548-amino-acid polypeptide reads, in one-letter code: Membrane protein insertase YidC (548 aa).

A run of 5 helical transmembrane segments spans residues 6–26 (NLIL…WESD), 349–369 (TVFQ…TLLV), 424–444 (LGGC…YWAL), 455–475 (FALW…PILM), and 503–523 (PIIF…YWLV).

Belongs to the OXA1/ALB3/YidC family. Type 1 subfamily. As to quaternary structure, interacts with the Sec translocase complex via SecD. Specifically interacts with transmembrane segments of nascent integral membrane proteins during membrane integration.

The protein resides in the cell inner membrane. Its function is as follows. Required for the insertion and/or proper folding and/or complex formation of integral membrane proteins into the membrane. Involved in integration of membrane proteins that insert both dependently and independently of the Sec translocase complex, as well as at least some lipoproteins. Aids folding of multispanning membrane proteins. The sequence is that of Membrane protein insertase YidC from Aeromonas salmonicida (strain A449).